Here is a 62-residue protein sequence, read N- to C-terminus: Large ribosomal subunit protein eL24 (62 aa).

Residues Cys6, Cys9, Cys32, and Cys36 each contribute to the Zn(2+) site. Residues 6 to 36 (CSFCGELLEPGTGLLFAKRDGSTYYFCSSKC) form a C4-type zinc finger.

This sequence belongs to the eukaryotic ribosomal protein eL24 family. Part of the 50S ribosomal subunit. Forms a cluster with proteins L3 and L14. The cofactor is Zn(2+).

In terms of biological role, binds to the 23S rRNA. The sequence is that of Large ribosomal subunit protein eL24 from Methanococcoides burtonii (strain DSM 6242 / NBRC 107633 / OCM 468 / ACE-M).